Reading from the N-terminus, the 179-residue chain is ATP synthase subunit delta (179 aa).

Belongs to the ATPase delta chain family. F-type ATPases have 2 components, F(1) - the catalytic core - and F(0) - the membrane proton channel. F(1) has five subunits: alpha(3), beta(3), gamma(1), delta(1), epsilon(1). F(0) has three main subunits: a(1), b(2) and c(10-14). The alpha and beta chains form an alternating ring which encloses part of the gamma chain. F(1) is attached to F(0) by a central stalk formed by the gamma and epsilon chains, while a peripheral stalk is formed by the delta and b chains.

It localises to the cell inner membrane. Functionally, f(1)F(0) ATP synthase produces ATP from ADP in the presence of a proton or sodium gradient. F-type ATPases consist of two structural domains, F(1) containing the extramembraneous catalytic core and F(0) containing the membrane proton channel, linked together by a central stalk and a peripheral stalk. During catalysis, ATP synthesis in the catalytic domain of F(1) is coupled via a rotary mechanism of the central stalk subunits to proton translocation. This protein is part of the stalk that links CF(0) to CF(1). It either transmits conformational changes from CF(0) to CF(1) or is implicated in proton conduction. This Thermosipho melanesiensis (strain DSM 12029 / CIP 104789 / BI429) protein is ATP synthase subunit delta.